Reading from the N-terminus, the 257-residue chain is Putative hydro-lyase Bphy_2364 (257 aa).

Belongs to the D-glutamate cyclase family.

The sequence is that of Putative hydro-lyase Bphy_2364 from Paraburkholderia phymatum (strain DSM 17167 / CIP 108236 / LMG 21445 / STM815) (Burkholderia phymatum).